The sequence spans 640 residues: Chaperone protein DnaK (640 aa).

Threonine 199 is modified (phosphothreonine; by autocatalysis). The span at 606–621 (QQAAGAGAQQADGTGK) shows a compositional bias: low complexity. The segment at 606–640 (QQAAGAGAQQADGTGKAADDGVVDAEFEEVKEDNK) is disordered. Residues 626–640 (GVVDAEFEEVKEDNK) show a composition bias toward acidic residues.

Belongs to the heat shock protein 70 family.

In terms of biological role, acts as a chaperone. This Cellvibrio japonicus (strain Ueda107) (Pseudomonas fluorescens subsp. cellulosa) protein is Chaperone protein DnaK.